A 441-amino-acid polypeptide reads, in one-letter code: MDMLQFFRDALVQETGRHVDNDDFDALFSELGADPLVGVAVIERVTNKTVEKAPRAARPPREAPLPRGNVRNAFQDACSHVQEFLRKAGSANFWSRVYPAQRQLVLAFVNDAFDRLGCSLADMPVGTIVTYPRGVLDKHRRVFDGAIFEILADGGLVNVDPELGAIRTSTVVDKTPPQQILATIILEHPQFANLHRLLNVTGSQFAECLTGRLDPIKLLFGRSKDLLQDFYTNAPMSLAASLHLVAVIKRLLADGEYRPGKSIDILEVGAGLGGTTRFVVEALIEAQVPFRYVYTDISASFFAASKNRYKSLPPGSSMEFLVLDVEIPPPETLLGGFDVVVSTNCIHATRNLGVSCSNVRKLLRGGGFFALIEFTSRMYWLDLVFGLLDGWWLFEDGRKHCTVDETVWEEKLQLSGFSDVLWADVEGDDKSSLQLLVACTD.

Positions 266–368 (LEVGAGLGGT…VRKLLRGGGF (103 aa)) are methyltransferase (CMeT) domain.

The protein belongs to the methyltransferase superfamily.

The protein operates within secondary metabolite biosynthesis. Functionally, polyketide methyltransferase; part of the gene cluster that mediates the biosynthesis of ustilaginoidins, dimeric gamma-naphthopyrones isolated from different fungal species. The first step in the biosynthesis of ustilaginoidins is the production of gamma-naphthopyrone precursor YWA1 by the non-reducing polyketide synthase ustP, via condensation of one acetyl-CoA starter unit with 6 malonyl-CoA units. YWA1 is then probably substrate of the ustZ to yield norrubrofusarin via a dehydration reaction. A key enzyme in the biosynthetic pathway is the laccase ustL, which catalyzes the oxidative dimerization of norrubrofusarin to ustilaginoidin A. It can produce the M- and P-atropisomers in varying amounts, depending on the reaction conditions. For the biosynthesis of 3-methylustilaginoid in derivatives such as chaetochromin A, a methylated derivative of YWA1 is required. The C-methylation is considered to be catalyzed by ustM, the phosphopantetheine attachment site of which indicates that it acts on the growing polyketide chain before release of the product. For the biosynthesis of chaetochromin A, it is assumed that saturation of the D2 double bond takes place before dimerization, and is probably catalyzed by an external reductase because no candidate gene was identified within the cluster. The protein is Polyketide methyltransferase ustM of Ustilaginoidea virens (Rice false smut fungus).